The primary structure comprises 806 residues: GPI ethanolamine phosphate transferase 2 (806 aa).

Asn-70, Asn-184, and Asn-242 each carry an N-linked (GlcNAc...) asparagine glycan. Helical transmembrane passes span 396–416 (MLFL…YCYI), 425–445 (SVLM…SSFV), and 451–471 (IWWW…PSCT). Asn-488 carries an N-linked (GlcNAc...) asparagine glycan. Transmembrane regions (helical) follow at residues 508 to 528 (PSIK…DGFT), 532 to 552 (LLSI…TCWA), 593 to 613 (LFFK…VVFA), 624 to 644 (LFTI…FLVF), 664 to 684 (CEMF…QFGG), 706 to 726 (IYVV…YWSL), 745 to 765 (LSSM…CICM), and 782 to 804 (LLGW…LLMV).

Belongs to the PIGG/PIGN/PIGO family. PIGG subfamily.

The protein resides in the endoplasmic reticulum membrane. Its pathway is glycolipid biosynthesis; glycosylphosphatidylinositol-anchor biosynthesis. Ethanolamine phosphate transferase involved in glycosylphosphatidylinositol-anchor biosynthesis. Transfers ethanolamine phosphate to the GPI second mannose. This chain is GPI ethanolamine phosphate transferase 2 (LAS21), found in Eremothecium gossypii (strain ATCC 10895 / CBS 109.51 / FGSC 9923 / NRRL Y-1056) (Yeast).